Reading from the N-terminus, the 609-residue chain is Membrane-bound O-acyltransferase GUP2 (609 aa).

The first 18 residues, 1-18, serve as a signal peptide directing secretion; sequence MSMLRIWSCIVHFFSVQA. Residues 19–75 lie on the Lumenal side of the membrane; sequence LDSRIKPDIEFKRRQRIFINSSKEENGSSSSAVTVTRNPVLSSNSPSPPLWNTWEFR. Residues 76-96 form a helical membrane-spanning segment; it reads LYYLAFTVVVPFMIKAALATS. At 97–133 the chain is on the cytoplasmic side; the sequence is SESNPNYYKFSGLLAHGWILGRKVDNSDPQYRFFRSN. A helical transmembrane segment spans residues 134-154; sequence FFLLAILILLQIILKKVFVKF. Residues 155–169 lie on the Lumenal side of the membrane; sequence SKIPKTKFDFACGLV. A helical membrane pass occupies residues 170–190; that stretch reads FVCFMYGINSVKLFTHAFIFF. The Cytoplasmic segment spans residues 191 to 200; it reads TLAHSLKRKR. Residues 201-221 traverse the membrane as a helical segment; the sequence is LIAAFAIWSYGIFTLFINQKM. Residues 222–324 lie on the Lumenal side of the membrane; the sequence is KNLPFNNIAI…VAEHHIQDYN (103 aa). The helical transmembrane segment at 325 to 345 threads the bilayer; sequence FINFIAYITYAPLFLVGPIIT. At 346 to 371 the chain is on the cytoplasmic side; it reads FNDYLYQSENKLPSLTKKNIGFYALK. Residues 372-392 traverse the membrane as a helical segment; sequence VFSSLLLMEIILHYIYVGAIA. At 393 to 406 the chain is on the lumenal side; it reads RTKAWNNDTPLQQA. The chain crosses the membrane as a helical span at residues 407 to 427; that stretch reads MIALFNLNIMYLKLLIPWRLF. The Cytoplasmic segment spans residues 428–474; sequence RLWAMVDGIDAPENMLRCVDNNYSTVGFWRAWHTSFNKWVIRYIYVP. A helical membrane pass occupies residues 475-495; it reads FGGSNNKILTSFAVFSFVAIW. The active site involves His496. The Lumenal portion of the chain corresponds to 496 to 502; the sequence is HDIQLRV. The helical transmembrane segment at 503 to 523 threads the bilayer; the sequence is LFWGWLTVLLLLGETYITNCF. Residues 524-533 are Cytoplasmic-facing; that stretch reads SRYRFRSWYR. Residues 534-554 traverse the membrane as a helical segment; sequence FVCGIGAAINICMMMIINVYG. Topologically, residues 555–575 are lumenal; it reads FCLGAEGTKLLLKGIFNNSHS. Residues 576 to 596 form a helical membrane-spanning segment; sequence PEFLTAVMVSLFIAVQVMFEI. The Cytoplasmic portion of the chain corresponds to 597–609; it reads REEEKRHGINLKC.

The protein belongs to the membrane-bound acyltransferase family.

The protein resides in the endoplasmic reticulum membrane. Functionally, probable membrane-bound O-acyltransferase. Together with GUP1, has an influence on the chemical composition of the yeast extracellular matrix (yECM) in yeast multicellular aggregates, such as biofilms and colonies. The polypeptide is Membrane-bound O-acyltransferase GUP2 (GUP2) (Saccharomyces cerevisiae (strain ATCC 204508 / S288c) (Baker's yeast)).